Reading from the N-terminus, the 93-residue chain is Small ribosomal subunit protein uS19 (93 aa).

The segment at 73–93 (EFSPTRTYRGHNKKDKKIQKK) is disordered. A compositionally biased stretch (basic residues) spans 80 to 93 (YRGHNKKDKKIQKK).

The protein belongs to the universal ribosomal protein uS19 family.

Its function is as follows. Protein S19 forms a complex with S13 that binds strongly to the 16S ribosomal RNA. The polypeptide is Small ribosomal subunit protein uS19 (rpsS) (Aster yellows phytoplasma).